We begin with the raw amino-acid sequence, 213 residues long: Neuromodulin (213 aa).

A disordered region spans residues 1 to 213 (MLCCIRRTKP…AEEAGKDQNV (213 aa)). 2 S-palmitoyl cysteine lipidation sites follow: Cys3 and Cys4. Basic and acidic residues predominate over residues 9-33 (KPVEKNEEADQEIKQDGTKPEENAH). The IQ domain maps to 32-61 (AHKAATKIQASFRGHITRKKMKDEDKDGEN). Positions 57–73 (KDGENDTAPDESAETEE) are enriched in acidic residues. A compositionally biased stretch (basic and acidic residues) spans 74–86 (KEERVSPSEEKPV). The span at 102–122 (PNSPAAEAPPTAATDSAPSDT) shows a compositional bias: low complexity. The span at 157 to 169 (EKEEEEEEEEEEE) shows a compositional bias: acidic residues. Residues 191-213 (QTDKKEALDDSKPAEEAGKDQNV) are compositionally biased toward basic and acidic residues.

The protein belongs to the neuromodulin family. As to quaternary structure, binds calmodulin with a greater affinity in the absence of Ca(2+) than in its presence. Post-translationally, palmitoylated. Palmitoylation is essential for plasma membrane association.

Its subcellular location is the cell membrane. The protein resides in the cell projection. It localises to the growth cone membrane. The protein localises to the synapse. It is found in the filopodium membrane. This protein is associated with nerve growth. It is a major component of the motile 'growth cones' that form the tips of elongating axons. Plays a role in axonal and dendritic filopodia induction. This Carassius auratus (Goldfish) protein is Neuromodulin (gap43).